The following is a 462-amino-acid chain: Chitinase-like mite allergen Der f 18.0101 (462 aa).

A signal peptide spans 1-25 (MTRFSLTVLAVLAACFGSNIRPNVA). Positions 29–378 (PKTVCYYESW…HAIQSNYYHG (350 aa)) constitute a GH18 domain. A disulfide bridge links cysteine 33 with cysteine 58. Asparagine 338 carries an N-linked (GlcNAc...) asparagine glycan. A Chitin-binding type-2 domain is found at 404–462 (VFHCHEEGFFRDKTYCATYYECKKGDFGLEKTVHHCANHLQAFDEVSRTCIDHTKIPGC). Residues cysteine 439 and cysteine 453 are joined by a disulfide bond.

Belongs to the glycosyl hydrolase 18 family. Chitinase class II subfamily. As to expression, expressed in the upper digestive tract. Staining is observed in the ventriculus, and in very rare individuals, also in the intestine or esophagus. No expression in fecal pellets neither inside the rectum nor defecated outside of the body.

The protein localises to the secreted. Functionally, probably a non-catalytic chitinase-like protein, which binds to insoluble chitin and enhances the activity of the catalytic chitinases. Has weak chitin-binding activity. This Dermatophagoides farinae (American house dust mite) protein is Chitinase-like mite allergen Der f 18.0101.